The following is a 300-amino-acid chain: Ribosomal RNA small subunit methyltransferase H (300 aa).

S-adenosyl-L-methionine-binding positions include G33–H35, D53, F78, D97, and Q104.

The protein belongs to the methyltransferase superfamily. RsmH family.

Its subcellular location is the cytoplasm. It catalyses the reaction cytidine(1402) in 16S rRNA + S-adenosyl-L-methionine = N(4)-methylcytidine(1402) in 16S rRNA + S-adenosyl-L-homocysteine + H(+). Its function is as follows. Specifically methylates the N4 position of cytidine in position 1402 (C1402) of 16S rRNA. The chain is Ribosomal RNA small subunit methyltransferase H from Karelsulcia muelleri (strain GWSS) (Sulcia muelleri).